The chain runs to 351 residues: Peptide chain release factor 1 (351 aa).

Glutamine 229 carries the N5-methylglutamine modification.

It belongs to the prokaryotic/mitochondrial release factor family. Post-translationally, methylated by PrmC. Methylation increases the termination efficiency of RF1.

It localises to the cytoplasm. Peptide chain release factor 1 directs the termination of translation in response to the peptide chain termination codons UAG and UAA. This chain is Peptide chain release factor 1, found in Cereibacter sphaeroides (strain ATCC 17025 / ATH 2.4.3) (Rhodobacter sphaeroides).